Here is a 176-residue protein sequence, read N- to C-terminus: Shikimate kinase (176 aa).

Residue 14 to 19 (GAGKST) coordinates ATP. Residue Ser-18 participates in Mg(2+) binding. Asp-36, Arg-60, and Gly-83 together coordinate substrate. Position 121 (Arg-121) interacts with ATP. Arg-140 is a substrate binding site.

It belongs to the shikimate kinase family. In terms of assembly, monomer. The cofactor is Mg(2+).

It localises to the cytoplasm. The catalysed reaction is shikimate + ATP = 3-phosphoshikimate + ADP + H(+). The protein operates within metabolic intermediate biosynthesis; chorismate biosynthesis; chorismate from D-erythrose 4-phosphate and phosphoenolpyruvate: step 5/7. Its function is as follows. Catalyzes the specific phosphorylation of the 3-hydroxyl group of shikimic acid using ATP as a cosubstrate. In Francisella philomiragia subsp. philomiragia (strain ATCC 25017 / CCUG 19701 / FSC 153 / O#319-036), this protein is Shikimate kinase.